We begin with the raw amino-acid sequence, 376 residues long: N-acetyldiaminopimelate deacetylase (376 aa).

D69 is an active-site residue. The active-site Proton acceptor is E128.

It belongs to the peptidase M20A family. N-acetyldiaminopimelate deacetylase subfamily.

The catalysed reaction is N-acetyl-(2S,6S)-2,6-diaminopimelate + H2O = (2S,6S)-2,6-diaminopimelate + acetate. It functions in the pathway amino-acid biosynthesis; L-lysine biosynthesis via DAP pathway; LL-2,6-diaminopimelate from (S)-tetrahydrodipicolinate (acetylase route): step 3/3. In terms of biological role, catalyzes the conversion of N-acetyl-diaminopimelate to diaminopimelate and acetate. This Streptococcus pneumoniae (strain Taiwan19F-14) protein is N-acetyldiaminopimelate deacetylase.